A 158-amino-acid chain; its full sequence is Endoribonuclease YbeY (158 aa).

Residues His-119, His-123, and His-129 each contribute to the Zn(2+) site.

Belongs to the endoribonuclease YbeY family. Zn(2+) is required as a cofactor.

It is found in the cytoplasm. Its function is as follows. Single strand-specific metallo-endoribonuclease involved in late-stage 70S ribosome quality control and in maturation of the 3' terminus of the 16S rRNA. The sequence is that of Endoribonuclease YbeY from Acinetobacter baumannii (strain AB307-0294).